Reading from the N-terminus, the 69-residue chain is Small ribosomal subunit protein bS21 (69 aa).

The tract at residues 49–69 (IESAKRKAEKKKRLFSKKDKA) is disordered.

It belongs to the bacterial ribosomal protein bS21 family.

The chain is Small ribosomal subunit protein bS21 from Leptospira borgpetersenii serovar Hardjo-bovis (strain JB197).